A 179-amino-acid polypeptide reads, in one-letter code: MARLQEIYRDKIAPELVKQFGYTSPMQVPRLTKITLNMGVSEAVADKKIMDNAVADLTKIAGQKPVVTKAKKAIAGFKIREGQAIGCMVTLRGAQMYEFLDRFVTIALPRVRDFRGISGRAFDGRGNYNIGVKEQIIFPEIEYDKVDALRGLNISITTTAKTDEEAKALLTAFRFPFKN.

The protein belongs to the universal ribosomal protein uL5 family. In terms of assembly, part of the 50S ribosomal subunit; part of the 5S rRNA/L5/L18/L25 subcomplex. Contacts the 5S rRNA and the P site tRNA. Forms a bridge to the 30S subunit in the 70S ribosome.

Functionally, this is one of the proteins that bind and probably mediate the attachment of the 5S RNA into the large ribosomal subunit, where it forms part of the central protuberance. In the 70S ribosome it contacts protein S13 of the 30S subunit (bridge B1b), connecting the 2 subunits; this bridge is implicated in subunit movement. Contacts the P site tRNA; the 5S rRNA and some of its associated proteins might help stabilize positioning of ribosome-bound tRNAs. The chain is Large ribosomal subunit protein uL5 from Acidovorax ebreus (strain TPSY) (Diaphorobacter sp. (strain TPSY)).